Here is a 160-residue protein sequence, read N- to C-terminus: Large ribosomal subunit protein eL21A (160 aa).

A Glycyl lysine isopeptide (Lys-Gly) (interchain with G-Cter in ubiquitin) cross-link involves residue Lys32.

It belongs to the eukaryotic ribosomal protein eL21 family. As to quaternary structure, component of the large ribosomal subunit (LSU). Mature yeast ribosomes consist of a small (40S) and a large (60S) subunit. The 40S small subunit contains 1 molecule of ribosomal RNA (18S rRNA) and 33 different proteins (encoded by 57 genes). The large 60S subunit contains 3 rRNA molecules (25S, 5.8S and 5S rRNA) and 46 different proteins (encoded by 81 genes).

The protein resides in the cytoplasm. In terms of biological role, component of the ribosome, a large ribonucleoprotein complex responsible for the synthesis of proteins in the cell. The small ribosomal subunit (SSU) binds messenger RNAs (mRNAs) and translates the encoded message by selecting cognate aminoacyl-transfer RNA (tRNA) molecules. The large subunit (LSU) contains the ribosomal catalytic site termed the peptidyl transferase center (PTC), which catalyzes the formation of peptide bonds, thereby polymerizing the amino acids delivered by tRNAs into a polypeptide chain. The nascent polypeptides leave the ribosome through a tunnel in the LSU and interact with protein factors that function in enzymatic processing, targeting, and the membrane insertion of nascent chains at the exit of the ribosomal tunnel. The chain is Large ribosomal subunit protein eL21A from Saccharomyces cerevisiae (strain ATCC 204508 / S288c) (Baker's yeast).